A 665-amino-acid chain; its full sequence is Translation factor guf1, mitochondrial (665 aa).

The transit peptide at 1–53 (MRGCLQVLRWLSTSPARRPVSSGLRLRSYEIVSPSILRPFTSTVRRQAQASRN) directs the protein to the mitochondrion. The tr-type G domain maps to 67–247 (ERFRNFCIVA…TVIERIPAPV (181 aa)). Residues 76 to 83 (AHVDHGKS), 140 to 144 (DTPGH), and 194 to 197 (NKVD) each bind GTP.

The protein belongs to the TRAFAC class translation factor GTPase superfamily. Classic translation factor GTPase family. LepA subfamily.

It localises to the mitochondrion inner membrane. It catalyses the reaction GTP + H2O = GDP + phosphate + H(+). Its function is as follows. Promotes mitochondrial protein synthesis. May act as a fidelity factor of the translation reaction, by catalyzing a one-codon backward translocation of tRNAs on improperly translocated ribosomes. Binds to mitochondrial ribosomes in a GTP-dependent manner. In Talaromyces stipitatus (strain ATCC 10500 / CBS 375.48 / QM 6759 / NRRL 1006) (Penicillium stipitatum), this protein is Translation factor guf1, mitochondrial (guf1).